A 614-amino-acid chain; its full sequence is UvrABC system protein C (614 aa).

The GIY-YIG domain maps to 12–89 (DKPGVYLFRG…IKEHRPRYNV (78 aa)). Positions 198–233 (ADLVRGLARKMEAAAANLEFERAAELRDQLRAVEQV) constitute a UVR domain.

It belongs to the UvrC family. Interacts with UvrB in an incision complex.

It localises to the cytoplasm. The UvrABC repair system catalyzes the recognition and processing of DNA lesions. UvrC both incises the 5' and 3' sides of the lesion. The N-terminal half is responsible for the 3' incision and the C-terminal half is responsible for the 5' incision. This Desulforudis audaxviator (strain MP104C) protein is UvrABC system protein C.